A 546-amino-acid polypeptide reads, in one-letter code: MDKRAMLGAIGLAFGLMAWPFGASAKEKSMVWNEQWKTPSFVSGSLLKGEDAPEELVYRYLDQEKNTFQLGGQARERLSLIGKQTDELGHTVMRFEQRYRGIPVYGAVLVAHVNDGELSSLSGTLIPNLDKRTLKTEAAISIQQAEMIAKQDVADAVTKERPAAEEGKPTRLVIYPDGETPRLAYEVNVRFLTPVPGNWIYMIDAADGKVLNKWNQMDEAKPGGGQPVAGTSTVGVGRGVLGDQKYINTTYSSYYGYYYLQDNTRGSGIFTYDGRNRTVLPGSLWADVDNQFFASYDAAAVDAHYYAGVVYDYYKNVHGRLSYDGSNAAIRSTVHYGRGYNNAFWNGSQMVYGDGDGQTFLPFSGGIDVVGHELTHAVTDYTAGLVYQNESGAINEAMSDIFGTLVEFYANRNPDWEIGEDIYTPGIAGDALRSMSDPAKYGDPDHYSKRYTGTQDNGGVHTNSGIINKAAYLLSQGGVHYGVSVTGIGRDKMGKIFYRALVYYLTPTSNFSQLRAACVQAAADLYGSTSQEVNSVKQAFNAVGVY.

Residues Met-1–Ala-25 form the signal peptide. Positions Lys-26–Val-228 are cleaved as a propeptide — activation peptide. Ca(2+) is bound by residues Asp-287, Asp-289, Gln-291, and Asp-368. Zn(2+) is bound at residue His-372. Glu-373 is an active-site residue. 2 residues coordinate Zn(2+): His-376 and Glu-396. Ca(2+) contacts are provided by Asn-413, Asp-415, Glu-417, Glu-420, Tyr-423, Thr-424, Ile-427, and Asp-430. The active-site Proton donor is His-461.

The protein belongs to the peptidase M4 family. Ca(2+) serves as cofactor. Zn(2+) is required as a cofactor.

Its subcellular location is the secreted. It carries out the reaction Preferential cleavage: Xaa-|-Leu &gt; Xaa-|-Phe.. Its function is as follows. Extracellular zinc metalloprotease. Has collagenase activity. This Bacillus sp. (strain EA1) protein is Thermolysin (npr).